The chain runs to 364 residues: MGLCFQLNLASLSLILFSSFPGLLAQSQQHFLGQNNTSLLSGGRCNLARGKWVYDSSYPLYSAFSCPFIDSEFNCQKAGRPDTNYQHFRWQPFSCPLPRFDGANFMRRMRGKKIMMVGDSLSLNMFESLACLLHASLPNAKYSLRRSQPLTSLTFQDYGVTINLYRTQFLVDVVQEKAGRVLVLDSIKQADAWLGMDVLIFNSWHWWTHTSGLQPWDYMREGNQLYKDMNRLVAYYKGLNTWARWINNNIVPSRTQVFFQGVSPVHYDGREWNEPLKSCNGQTQPFMGQRYPGGLPLGWVVVNKVLSRIRKPVHLLDLTTLSEYRKDAHPSLYNGISKDLDCSHWCLPGLPDTWNLLLYSSLTS.

The helical; Signal-anchor for type II membrane protein transmembrane segment at 9-25 (LASLSLILFSSFPGLLA) threads the bilayer. Positions 118–120 (GDS) match the GDS motif motif. Residues 341 to 355 (DCSHWCLPGLPDTWN) carry the DCXHWCLPGXXDXWN motif motif.

Belongs to the PC-esterase family. TBL subfamily.

It is found in the membrane. In terms of biological role, may act as a bridging protein that binds pectin and other cell wall polysaccharides. Probably involved in maintaining esterification of pectins. May be involved in the specific O-acetylation of cell wall polymers. The polypeptide is Protein trichome birefringence-like 40 (TBL40) (Arabidopsis thaliana (Mouse-ear cress)).